The sequence spans 419 residues: Tryptophan synthase beta chain (419 aa).

Residue Lys-86 is modified to N6-(pyridoxal phosphate)lysine. Residues 394–403 (VEQQKVEQQK) show a composition bias toward basic and acidic residues. A disordered region spans residues 394–419 (VEQQKVEQQKADNQNTEKNNQESGNE). A compositionally biased stretch (polar residues) spans 404-419 (ADNQNTEKNNQESGNE).

This sequence belongs to the TrpB family. In terms of assembly, tetramer of two alpha and two beta chains. Pyridoxal 5'-phosphate serves as cofactor.

It carries out the reaction (1S,2R)-1-C-(indol-3-yl)glycerol 3-phosphate + L-serine = D-glyceraldehyde 3-phosphate + L-tryptophan + H2O. The protein operates within amino-acid biosynthesis; L-tryptophan biosynthesis; L-tryptophan from chorismate: step 5/5. In terms of biological role, the beta subunit is responsible for the synthesis of L-tryptophan from indole and L-serine. The protein is Tryptophan synthase beta chain of Shewanella halifaxensis (strain HAW-EB4).